The sequence spans 329 residues: Biotin synthase (329 aa).

The Radical SAM core domain maps to 48–278; the sequence is FVGDKVFLCS…TKRISICGGR (231 aa). [4Fe-4S] cluster-binding residues include C66, C70, and C73. 2 residues coordinate [2Fe-2S] cluster: S143 and C203.

The protein belongs to the radical SAM superfamily. Biotin synthase family. In terms of assembly, homodimer. Requires [4Fe-4S] cluster as cofactor. The cofactor is [2Fe-2S] cluster.

The catalysed reaction is (4R,5S)-dethiobiotin + (sulfur carrier)-SH + 2 reduced [2Fe-2S]-[ferredoxin] + 2 S-adenosyl-L-methionine = (sulfur carrier)-H + biotin + 2 5'-deoxyadenosine + 2 L-methionine + 2 oxidized [2Fe-2S]-[ferredoxin]. Its pathway is cofactor biosynthesis; biotin biosynthesis; biotin from 7,8-diaminononanoate: step 2/2. Catalyzes the conversion of dethiobiotin (DTB) to biotin by the insertion of a sulfur atom into dethiobiotin via a radical-based mechanism. The sequence is that of Biotin synthase from Geotalea daltonii (strain DSM 22248 / JCM 15807 / FRC-32) (Geobacter daltonii).